The chain runs to 327 residues: Glycerol-3-phosphate dehydrogenase [NAD(P)+] (327 aa).

Residues serine 10, phenylalanine 11, arginine 31, and lysine 108 each contribute to the NADPH site. Lysine 108, glycine 136, and serine 138 together coordinate sn-glycerol 3-phosphate. Alanine 140 is a binding site for NADPH. Residues lysine 191, aspartate 246, serine 256, arginine 257, and asparagine 258 each contribute to the sn-glycerol 3-phosphate site. Catalysis depends on lysine 191, which acts as the Proton acceptor. Residue arginine 257 coordinates NADPH. Leucine 281 and glutamate 283 together coordinate NADPH.

The protein belongs to the NAD-dependent glycerol-3-phosphate dehydrogenase family.

Its subcellular location is the cytoplasm. It catalyses the reaction sn-glycerol 3-phosphate + NAD(+) = dihydroxyacetone phosphate + NADH + H(+). It carries out the reaction sn-glycerol 3-phosphate + NADP(+) = dihydroxyacetone phosphate + NADPH + H(+). The protein operates within membrane lipid metabolism; glycerophospholipid metabolism. In terms of biological role, catalyzes the reduction of the glycolytic intermediate dihydroxyacetone phosphate (DHAP) to sn-glycerol 3-phosphate (G3P), the key precursor for phospholipid synthesis. The chain is Glycerol-3-phosphate dehydrogenase [NAD(P)+] from Ehrlichia ruminantium (strain Gardel).